The sequence spans 488 residues: L-amino oxidase (488 aa).

FAD-binding positions include 60 to 61 (MS), 80 to 81 (EA), Arg-88, and 104 to 107 (GPMR). The substrate site is built by Arg-107 and Tyr-388. An intrachain disulfide couples Cys-347 to Cys-428. FAD is bound by residues Glu-474 and 481–486 (GWIDST). 481–482 (GW) is a substrate binding site.

The protein belongs to the flavin monoamine oxidase family. FIG1 subfamily. In terms of assembly, monomer. This is in contrast with most of its orthologs, that are non-covalently linked homodimers. The cofactor is FAD. Post-translationally, N-glycosylated. In terms of tissue distribution, expressed by the venom gland.

Its subcellular location is the secreted. It catalyses the reaction an L-alpha-amino acid + O2 + H2O = a 2-oxocarboxylate + H2O2 + NH4(+). It carries out the reaction L-leucine + O2 + H2O = 4-methyl-2-oxopentanoate + H2O2 + NH4(+). Catalyzes an oxidative deamination of predominantly hydrophobic and aromatic L-amino acids, thus producing hydrogen peroxide that may contribute to the diverse toxic effects of this enzyme. Shows activity on L-Leu. Exhibits diverse biological activities, such as hemorrhage, hemolysis, edema, antibacterial and antiparasitic activities, as well as regulation of platelet aggregation. When tested on SW480 and SW620 human colon cancer cells, shows inhibition of cell proliferation, and induction of apoptosis, which is probably a consequence of the increased caspase-3 activity and the decreased Bcl-2 expression. This is L-amino oxidase from Trimeresurus purpureomaculatus (Mangrove pit viper).